We begin with the raw amino-acid sequence, 239 residues long: 1-(5-phosphoribosyl)-5-[(5-phosphoribosylamino)methylideneamino] imidazole-4-carboxamide isomerase (239 aa).

D9 functions as the Proton acceptor in the catalytic mechanism. D131 functions as the Proton donor in the catalytic mechanism.

The protein belongs to the HisA/HisF family.

The protein resides in the cytoplasm. It carries out the reaction 1-(5-phospho-beta-D-ribosyl)-5-[(5-phospho-beta-D-ribosylamino)methylideneamino]imidazole-4-carboxamide = 5-[(5-phospho-1-deoxy-D-ribulos-1-ylimino)methylamino]-1-(5-phospho-beta-D-ribosyl)imidazole-4-carboxamide. Its pathway is amino-acid biosynthesis; L-histidine biosynthesis; L-histidine from 5-phospho-alpha-D-ribose 1-diphosphate: step 4/9. This chain is 1-(5-phosphoribosyl)-5-[(5-phosphoribosylamino)methylideneamino] imidazole-4-carboxamide isomerase, found in Bacteroides fragilis (strain ATCC 25285 / DSM 2151 / CCUG 4856 / JCM 11019 / LMG 10263 / NCTC 9343 / Onslow / VPI 2553 / EN-2).